We begin with the raw amino-acid sequence, 251 residues long: Mast cell protease 3 (251 aa).

The signal sequence occupies residues 1–17; the sequence is MVLFLLLVALLSPAGEA. Residues 18–19 constitute a propeptide, activation peptide; it reads GK. Residues 20–243 enclose the Peptidase S1 domain; that stretch reads IIGGHEAKPH…FLSWIQRTMR (224 aa). Cysteines 48 and 64 form a disulfide. The Charge relay system role is filled by H63. N70 carries an N-linked (GlcNAc...) asparagine glycan. Residue D107 is the Charge relay system of the active site. 2 cysteine pairs are disulfide-bonded: C141/C207 and C172/C186. S201 (charge relay system) is an active-site residue.

The protein belongs to the peptidase S1 family. Granzyme subfamily.

The protein resides in the secreted. It is found in the cytoplasmic granule. This chain is Mast cell protease 3, found in Ovis aries (Sheep).